Reading from the N-terminus, the 723-residue chain is PX domain-containing protein EREL1 (723 aa).

The segment covering 1 to 12 has biased composition (basic residues); that stretch reads MMQRRSPPKHRH. Residues 1-26 form a disordered region; the sequence is MMQRRSPPKHRHDGTSPLPLGMDWSP. The 118-residue stretch at 48–165 folds into the PX domain; that stretch reads YCVTIPSWIV…SFLELEAAAR (118 aa). 2 disordered regions span residues 169-193 and 209-230; these read QDVDQNASDSNNDRSSTSSSPMVHP and YGSDTAYETSEVGSPSVGQDDI. Residues 172–193 show a composition bias toward low complexity; that stretch reads DQNASDSNNDRSSTSSSPMVHP. Polar residues predominate over residues 209–225; it reads YGSDTAYETSEVGSPSV. 2 coiled-coil regions span residues 401 to 474 and 503 to 555; these read NERL…LRQK and KHVL…LEKE. Residues 698 to 723 are disordered; the sequence is DVKTTEDVNEENSDEKDEASRETLKR. Residues 704–714 show a composition bias toward acidic residues; it reads DVNEENSDEKD.

It is found in the cytoplasm. The protein resides in the cytosol. It localises to the endosome membrane. In terms of biological role, acts as an effector of RABF2A and RABF2B. Involved in vacuolar transport of storage proteins. Regulates membrane trafficking to protein storage vacuoles (PSVs). Binds specifically to phosphatidylinositol 3-monophosphate (PtdIns3P). The chain is PX domain-containing protein EREL1 from Arabidopsis thaliana (Mouse-ear cress).